Here is a 407-residue protein sequence, read N- to C-terminus: BMP-like protein unc-129 (407 aa).

Residues Met1–Cys18 form the signal peptide. N-linked (GlcNAc...) asparagine glycosylation is found at Asn27, Asn42, and Asn211. Positions Asp252–Glu283 are disordered. An N-linked (GlcNAc...) asparagine glycan is attached at Asn395.

It belongs to the TGF-beta family. Interacts with netrin receptor unc-5; the interaction is direct.

The protein localises to the secreted. Its subcellular location is the extracellular space. In terms of biological role, required for the migration of axonal growth-cones and distal tip cells (DTC) along the dorsal-ventral axis of the body wall. Acts cell nonautonomously and independently of the classical daf-4, sma-6 or daf-1 TGFbeta receptor signaling. During axon migration, facilitates long-range repulsive guidance of unc-6/netrin by enhancing unc-5-unc-40 signaling at the expense of unc-5 alone signaling, probably through direct interaction with receptor unc-5. Involved in cell-cell contact formation in sensory rays in the developing male tail, via a pathway involving plx-2 and mab-20/semaphorin-2A. The polypeptide is BMP-like protein unc-129 (Caenorhabditis elegans).